A 475-amino-acid polypeptide reads, in one-letter code: MDSSCLNATTKMLATAPARGNVMSTSKPLAFSIERIMARTPEPKALPVPHFLQGAVPKGDPKHSLHLNSSIPCMIPFVPVAYDTNSKAGVNGSEPRKASLEVPAPPAVAPSAPAFSCSDLLNCALSLKGDLARDALPLQQYKLVRPRVVNHSSFHAMGALCYLNRGDGPCHPAASVNIHPVASYFLSSPLHPQPKTYLAERNKLVVPAVEKLPSGVAFKDLSQAQLQHYMKESAQLLSEKIAFKTSDFSRGSPNAKPKVFTCEVCGKVFNAHYNLTRHMPVHTGARPFVCKVCGKGFRQASTLCRHKIIHTQEKPHKCNQCGKAFNRSSTLNTHTRIHAGYKPFVCEFCGKGFHQKGNYKNHKLTHSGEKQFKCNICNKAFHQVYNLTFHMHTHNDKKPFTCPTCGKGFCRNFDLKKHVRKLHDSSLGLTRTPTGEPSSDPPPQLQQPPPAPLPPLQPTLPPPGPLPSGLHQGHQ.

The short motif at Pro28–Pro43 is the Engrailed homology 1 repressor element. C2H2-type zinc fingers lie at residues Phe260 to His282, Phe288 to His310, His316 to His338, Phe344 to His366, Phe372 to His394, and Phe400 to His423. The interval Ser425–Gln475 is disordered. Positions Leu427–Pro437 are enriched in polar residues. Over residues Ser439 to Leu466 the composition is skewed to pro residues.

This sequence belongs to the krueppel C2H2-type zinc-finger protein family.

It is found in the nucleus. In terms of biological role, transcription repressor. Involved in the axonal projection and proper termination of olfactory sensory neurons (OSN). Plays a role in rostro-caudal patterning of the diencephalon and in prethalamic formation. Expression is required in OSN to cell-autonomously regulate OSN axon projections. Regulates non-cell-autonomously the layer formation of the olfactory bulb development and the interneurons. May be required for correct rostral migration of the interneuron progenitors. In Mus musculus (Mouse), this protein is Fez family zinc finger protein 1 (Fezf1).